A 358-amino-acid chain; its full sequence is Src kinase-associated phosphoprotein 2 (358 aa).

Phosphoserine is present on residues S5 and S6. Residues 62-88 are disordered; the sequence is ESQDKGDAEDGEEYDDPFAGPPDTISL. Phosphotyrosine is present on Y75. Residues S87 and S90 each carry the phosphoserine modification. In terms of domain architecture, PH spans 116–219; that stretch reads FVLKAGYLEK…WVQQLNFVLQ (104 aa). Phosphotyrosine is present on residues Y151 and Y197. Phosphoserine is present on S223. The interval 232 to 254 is disordered; it reads ERGELYDDVDHPLPSSSPTRSLP. Positions 243–253 are enriched in low complexity; sequence PLPSSSPTRSL. At Y260 the chain carries Phosphotyrosine. Phosphoserine is present on residues S282 and S285. The SH3 domain occupies 296–357; sequence NYANFYQGLW…PKAYVMEMYD (62 aa).

This sequence belongs to the SKAP family. As to quaternary structure, interacts with FYB1, which is required for SKAP2 protein stability. Interacts with PTPNS1. Part of a complex consisting of SKAP2, FYB1 and PTPNS1. Part of a complex consisting of SKAP2, FYB1 and LILRB3. Interacts with LAT, GRB2, PTK2B and PRAM1. May interact with actin. May interact with FYN, HCK and LYN. Interacts with FASLG.

The protein localises to the cytoplasm. Its function is as follows. May be involved in B-cell and macrophage adhesion processes. In B-cells, may act by coupling the B-cell receptor (BCR) to integrin activation. May play a role in src signaling pathway. This Bos taurus (Bovine) protein is Src kinase-associated phosphoprotein 2 (SKAP2).